The sequence spans 224 residues: V-type ATP synthase subunit D (224 aa).

Residues 205–214 (AKAKQQRKDI) are compositionally biased toward basic and acidic residues. Residues 205–224 (AKAKQQRKDIQSGNHGSAAD) are disordered. The span at 215–224 (QSGNHGSAAD) shows a compositional bias: polar residues.

Belongs to the V-ATPase D subunit family.

Functionally, produces ATP from ADP in the presence of a proton gradient across the membrane. The protein is V-type ATP synthase subunit D of Deinococcus deserti (strain DSM 17065 / CIP 109153 / LMG 22923 / VCD115).